The following is a 762-amino-acid chain: PHD finger protein 20-like protein 1 (762 aa).

2 consecutive Tudor domains span residues 11 to 71 and 85 to 141; these read ITFE…LERP and VDFK…EDAK. Disordered regions lie at residues 178 to 231, 289 to 359, 383 to 411, 536 to 559, and 613 to 651; these read AKNK…TSSD, AEKK…CIKP, SVIN…RSQR, SLKL…EGTE, and LSGK…QHDY. Positions 193–211 are enriched in basic and acidic residues; sequence NKDKEERKWLKVPSKKEET. 2 stretches are compositionally biased toward polar residues: residues 319–340 and 383–398; these read DISS…SSGK and SVIN…NSPR. Residues 399 to 410 show a composition bias toward basic residues; the sequence is SYKHSQRRRRSQ. Residues 614-632 are compositionally biased toward basic and acidic residues; that stretch reads SGKKKEKEKEKKEKKEKDH. A compositionally biased stretch (basic residues) spans 633-647; it reads KSKQKKKKKKKKKSK.

Its subcellular location is the nucleus. In terms of biological role, is a negative regulator of proteasomal degradation of methylated proteins. Involved in the maintainance of pluripotency of embryonic stem cells. In Gallus gallus (Chicken), this protein is PHD finger protein 20-like protein 1 (PHF20L1).